The primary structure comprises 500 residues: Autophagy-related protein 18 (500 aa).

Residues 3–41 (DSSPTINFINFNQTGTCISLGTSKGFKIFNCEPFGKFYS) form a WD 1 repeat. The disordered stretch occupies residues 174 to 197 (VGGNTETSFKRDQQDAGHSDISDL). A compositionally biased stretch (basic and acidic residues) spans 181–194 (SFKRDQQDAGHSDI). 2 WD repeats span residues 243 to 283 (AHKG…KIYQ) and 288 to 327 (TYAT…SNNK). The L/FRRG motif signature appears at 284–288 (FRRGT). The segment at 328–358 (LDSDDSNMEEAAADDSSLDTTSIDALSDEEN) is disordered. Acidic residues predominate over residues 331–344 (DDSNMEEAAADDSS). A Phosphoserine modification is found at Ser-354.

The protein belongs to the WD repeat PROPPIN family. In terms of assembly, component of the PI(3,5)P2 regulatory complex, composed of ATG18, FIG4, FAB1, VAC14 and VAC7. VAC14 nucleates the assembly of the complex and serves as a scaffold. Interacts with ATG2, ATG9 and VAC17. The ATG2-ATG18 complex is essential for autophagosome formation.

The protein localises to the preautophagosomal structure membrane. It localises to the vacuole membrane. The protein resides in the endosome membrane. The PI(3,5)P2 regulatory complex regulates both the synthesis and turnover of phosphatidylinositol 3,5-bisphosphate (PtdIns(3,5)P2). May negatively regulate FAB1 activity by sequestering or masking VAC7 from FAB1. Necessary for proper vacuole morphology. Plays an important role in osmotically-induced vacuole fragmentation. Required for cytoplasm to vacuole transport (Cvt) vesicle formation, pexophagy and starvation-induced autophagy. Involved in correct ATG9 trafficking to the pre-autophagosomal structure. Might also be involved in premeiotic DNA replication. With ATG2, protects ATG8 from ARG4-mediated cleavage. This Saccharomyces cerevisiae (strain YJM789) (Baker's yeast) protein is Autophagy-related protein 18 (ATG18).